We begin with the raw amino-acid sequence, 321 residues long: Lipoyl synthase (321 aa).

Residues C68, C73, C79, C94, C98, C101, and S308 each coordinate [4Fe-4S] cluster. A Radical SAM core domain is found at 80-297 (FNHGTATFMI…KVLADELGFT (218 aa)).

The protein belongs to the radical SAM superfamily. Lipoyl synthase family. Requires [4Fe-4S] cluster as cofactor.

Its subcellular location is the cytoplasm. It carries out the reaction [[Fe-S] cluster scaffold protein carrying a second [4Fe-4S](2+) cluster] + N(6)-octanoyl-L-lysyl-[protein] + 2 oxidized [2Fe-2S]-[ferredoxin] + 2 S-adenosyl-L-methionine + 4 H(+) = [[Fe-S] cluster scaffold protein] + N(6)-[(R)-dihydrolipoyl]-L-lysyl-[protein] + 4 Fe(3+) + 2 hydrogen sulfide + 2 5'-deoxyadenosine + 2 L-methionine + 2 reduced [2Fe-2S]-[ferredoxin]. The protein operates within protein modification; protein lipoylation via endogenous pathway; protein N(6)-(lipoyl)lysine from octanoyl-[acyl-carrier-protein]: step 2/2. Its function is as follows. Catalyzes the radical-mediated insertion of two sulfur atoms into the C-6 and C-8 positions of the octanoyl moiety bound to the lipoyl domains of lipoate-dependent enzymes, thereby converting the octanoylated domains into lipoylated derivatives. This chain is Lipoyl synthase, found in Shewanella sp. (strain MR-7).